Reading from the N-terminus, the 1375-residue chain is DNA-directed RNA polymerase subunit beta (1375 aa).

This sequence belongs to the RNA polymerase beta chain family. In terms of assembly, the RNAP catalytic core consists of 2 alpha, 1 beta, 1 beta' and 1 omega subunit. When a sigma factor is associated with the core the holoenzyme is formed, which can initiate transcription.

The catalysed reaction is RNA(n) + a ribonucleoside 5'-triphosphate = RNA(n+1) + diphosphate. Functionally, DNA-dependent RNA polymerase catalyzes the transcription of DNA into RNA using the four ribonucleoside triphosphates as substrates. The protein is DNA-directed RNA polymerase subunit beta of Campylobacter jejuni subsp. jejuni serotype O:6 (strain 81116 / NCTC 11828).